The sequence spans 371 residues: Trans-enoyl reductase mycC (371 aa).

Residue 51-54 (CDWK) coordinates NADP(+). Residue 140-147 (CVVGTVGL) coordinates substrate. NADP(+) is bound by residues 182-185 (STAS), 205-208 (SPAN), tyrosine 223, and 270-271 (FE). 291 to 295 (GIRLL) is a binding site for substrate. 361–362 (VS) serves as a coordination point for NADP(+).

The protein belongs to the zinc-containing alcohol dehydrogenase family. Monomer.

It carries out the reaction L-leucine + 8 malonyl-CoA + 4 S-adenosyl-L-methionine + ATP + 9 NADPH + 12 H(+) = (5S)-5-(2-methylpropyl)-3-[(2E,6R,8E,10E,12E)-6,8,10,12-tetramethyltetradeca-2,8,10,12-tetraenoyl]-2,5-dihydro-1H-pyrrol-2-one + AMP + 4 S-adenosyl-L-homocysteine + 8 CO2 + diphosphate + 9 NADP(+) + 8 CoA + 7 H2O. It participates in mycotoxin biosynthesis. Its function is as follows. Trans-enoyl reductase; part of the gene cluster that mediates the biosynthesis of myceliothermophins, mycotoxins that contain a trans-fused decalin ring system connected to a conjugated 3-pyrrolin-2-one moiety and that have potential anti-tumor properties. The polyketide synthase module (PKS) of the PKS-NRPS mycA is responsible for the synthesis of the octaketide backbone. The downstream nonribosomal peptide synthetase (NRPS) module then amidates the carboxyl end of the octaketide with a leucine. A reductase-like domain (R) at the C-terminus catalyzes the reductive release of the polyketide-amino acid intermediate. Because mycA lacks a designated enoylreductase (ER) domain, the required activity is provided the enoyl reductase mycC. Following mycA-catalyzed construction and release of aminoacyl polyketide aldehyde, Knoevenagel condensation yields the expected ketone. This C18 keto acyclic precursor is the substrate of the Diels-Alderase mycB, that catalyzes the Diels-Alder cycloaddition to produce myceliothermophin E. A yet unknown oxygenase involved in the production of myceliothermophin A, via substitution with a hydroxyl group at the C21, has still to be identified. The chain is Trans-enoyl reductase mycC from Thermothelomyces thermophilus (strain ATCC 42464 / BCRC 31852 / DSM 1799) (Sporotrichum thermophile).